The sequence spans 372 residues: MTTAQHQHYTVEVGDTNFTIHSRYINLRPIGSGAQGIVCAAYDTITQQNVAIKKLSRPFQNVTHAKRAYREFKLMKLVNHKNIIGLLNAFTPQRNLEEFQDVYLVMELMDANLCQVIQMDLDHDRMSYLLYQMLCGIKHLHSAGIIHRDLKPSNIVVKADCTLKILDFGLARTAGTTFMMTPYVVTRYYRAPEVILGMGYTENVDIWSVGCIMGEMIRGGVLFPGTDHIDQWNKIIEQLGTPSPSFMQRLQPTVRNYVENRPRYTGYSFDRLFPDGLFPNDNNQNSRRKASDARNLLSKMLVIDPEQRISVDEALKHEYINVWYDAEEVDAPAPEPYDHSVDEREHTVEQWKELIYEEVMDYEAHNTNNRTR.

Residues 24 to 320 enclose the Protein kinase domain; sequence YINLRPIGSG…VDEALKHEYI (297 aa). ATP contacts are provided by residues 31–36 and K53; that span reads GSGAQG. D149 acts as the Proton acceptor in catalysis. A Phosphothreonine modification is found at T181. The TXY motif lies at 181–183; it reads TPY. Y183 carries the phosphotyrosine modification.

This sequence belongs to the protein kinase superfamily. CMGC Ser/Thr protein kinase family. MAP kinase subfamily. In terms of assembly, interacts with MKP-4 (via tyrosine-protein phosphatase domain); the interaction dephosphorylates bsk. Mg(2+) serves as cofactor. In terms of processing, dually phosphorylated on Thr-181 and Tyr-183, which activates the enzyme. As to expression, during gastrulation, expression is seen in cells undergoing morphogenetic movements. By stage 9 of embryonic development, expression is ubiquitous. At stages 12-14, expression occurs in epidermis and central nervous system. At stage 15, expression is restricted to ventral nerve cord, brain and some peripheral neurons. In larvae, expression is seen in all imaginal disks, with highest levels in wing and eye disks, and in the CNS. Adults express the protein in fat body and hemocytes.

The protein localises to the nucleus. The protein resides in the cytoplasm. It carries out the reaction L-seryl-[protein] + ATP = O-phospho-L-seryl-[protein] + ADP + H(+). It catalyses the reaction L-threonyl-[protein] + ATP = O-phospho-L-threonyl-[protein] + ADP + H(+). Its activity is regulated as follows. Activated by threonine and tyrosine phosphorylation by the dual specificity kinase, hep. Inhibited by dual specificity phosphatase, puckered. Functionally, mitogen-activated protein kinase and key component of the c-Jun N-terminal kinase (JNK) pathway which phosphorylate and activate transcription factors involved in a wide range of biological processes including response to various stresses, cellular proliferation, differentiation and migration, and regulation of cell shape. Responds to activation by environmental stress by phosphorylating a number of transcription factors, primarily components of AP-1 such as Jra and also the transcriptional repressor aop, and thus regulates transcriptional activity. Component of the immune response activated by bacterial infection, and is involved in wound healing and in dorsal closure, a morphogenetic movement during embryogenesis. Functions in the systematic response to wounding acting downstream of the Hayan-phenoloxidase PPO1 cascade. During epidermal wound healing involved in cellular polarization by inducing the translocation of sktl and mys/integrin beta to the trailing edge. Exhibits cytoprotective activity in neuronal cells in response to wounding to the integument. Controls the expression of a phosphatase, puckered, at the edges of wounded epidermal tissue and in the dorsal epithelium during dorsal closure. Regulates the activity of SREBP in neurons and thereby the accumulation of lipids in glia. Plays a role in positively regulating the expression of DIP2 independently of AP-1, thereby ensuring proper axon guidance in mushroom bodies. In enterocytes and differentiating progenitors of the gut that are experiencing inorganic phosphate (Pi) deficiency, activated by Cka to induce nearby progenitor cells to proliferate and form new absorptive cells, probably helping the organism to cope with the nutrient deficiency by maximizing absorption of dietary Pi. In Drosophila melanogaster (Fruit fly), this protein is Stress-activated protein kinase JNK.